The chain runs to 283 residues: Large ribosomal subunit protein uL4 (283 aa).

It belongs to the universal ribosomal protein uL4 family. Part of the 50S ribosomal subunit.

Its function is as follows. One of the primary rRNA binding proteins, this protein initially binds near the 5'-end of the 23S rRNA. It is important during the early stages of 50S assembly. It makes multiple contacts with different domains of the 23S rRNA in the assembled 50S subunit and ribosome. Forms part of the polypeptide exit tunnel. This is Large ribosomal subunit protein uL4 from Pyrobaculum aerophilum (strain ATCC 51768 / DSM 7523 / JCM 9630 / CIP 104966 / NBRC 100827 / IM2).